The primary structure comprises 151 residues: FAD synthase (151 aa).

ATP-binding positions include 12–13 (TF), 17–20 (HPGH), aspartate 97, and tyrosine 125.

It belongs to the archaeal FAD synthase family. In terms of assembly, homodimer. A divalent metal cation serves as cofactor.

The catalysed reaction is FMN + ATP + H(+) = FAD + diphosphate. It functions in the pathway cofactor biosynthesis; FAD biosynthesis; FAD from FMN: step 1/1. In terms of biological role, catalyzes the transfer of the AMP portion of ATP to flavin mononucleotide (FMN) to produce flavin adenine dinucleotide (FAD) coenzyme. The protein is FAD synthase of Methanococcus vannielii (strain ATCC 35089 / DSM 1224 / JCM 13029 / OCM 148 / SB).